The chain runs to 184 residues: Putative serine carboxypeptidase-like 52 (184 aa).

Positions 1–22 (MRTFSPKLLLLLLLVLRHHAES) are cleaved as a signal peptide. An N-linked (GlcNAc...) asparagine glycan is attached at asparagine 93.

It belongs to the peptidase S10 family.

The protein localises to the secreted. This Arabidopsis thaliana (Mouse-ear cress) protein is Putative serine carboxypeptidase-like 52 (SCPL52).